We begin with the raw amino-acid sequence, 149 residues long: Deoxyuridine 5'-triphosphate nucleotidohydrolase (149 aa).

Residues 68–70, asparagine 81, 85–87, and methionine 95 each bind substrate; these read RSG and LID.

The protein belongs to the dUTPase family. It depends on Mg(2+) as a cofactor.

It carries out the reaction dUTP + H2O = dUMP + diphosphate + H(+). It functions in the pathway pyrimidine metabolism; dUMP biosynthesis; dUMP from dCTP (dUTP route): step 2/2. This enzyme is involved in nucleotide metabolism: it produces dUMP, the immediate precursor of thymidine nucleotides and it decreases the intracellular concentration of dUTP so that uracil cannot be incorporated into DNA. This is Deoxyuridine 5'-triphosphate nucleotidohydrolase from Polynucleobacter necessarius subsp. necessarius (strain STIR1).